Consider the following 395-residue polypeptide: Carbohydrate sulfotransferase 6 (395 aa).

The Cytoplasmic portion of the chain corresponds to 1 to 5; sequence MWLPR. The chain crosses the membrane as a helical; Signal-anchor for type II membrane protein span at residues 6–26; sequence VSSTAVTALLLAQTFLLLFLV. The Lumenal segment spans residues 27–395; the sequence is SRPGPSSPAG…ASSTASHPRN (369 aa). 49–55 serves as a coordination point for 3'-phosphoadenylyl sulfate; sequence WRSGSSF. N-linked (GlcNAc...) asparagine glycosylation occurs at Asn-116. Residue 202 to 210 participates in 3'-phosphoadenylyl sulfate binding; it reads RDPRAVLRS. N-linked (GlcNAc...) asparagine glycans are attached at residues Asn-229, Asn-305, and Asn-328.

It belongs to the sulfotransferase 1 family. Gal/GlcNAc/GalNAc subfamily. As to expression, expressed in cornea. Mainly expressed in brain. Also expressed in spinal cord and trachea.

It is found in the golgi apparatus membrane. It carries out the reaction 3'-phosphoadenylyl sulfate + keratan = adenosine 3',5'-bisphosphate + keratan 6'-sulfate.. Its function is as follows. Sulfotransferase that utilizes 3'-phospho-5'-adenylyl sulfate (PAPS) as sulfonate donor to catalyze the transfer of sulfate to position 6 of non-reducing N-acetylglucosamine (GlcNAc) residues of keratan. Cooperates with B4GALT4 galactosyltransferase and B3GNT7 N-acetylglucosaminyltransferase to construct and elongate the sulfated disaccharide unit [-&gt;3Galbeta1-&gt;4(6-sulfoGlcNAcbeta)1-&gt;] within keratan sulfate polymer. Involved in biosynthesis of keratan sulfate in cornea, with an impact on proteoglycan fibril organization and corneal transparency. Involved in sulfation of endothelial mucins such as GLYCAM1. The chain is Carbohydrate sulfotransferase 6 from Homo sapiens (Human).